Reading from the N-terminus, the 284-residue chain is uncharacterized protein (284 aa).

Positions 1 to 23 (MKRGCAIAVMICGLITSVSAASA) are cleaved as a signal peptide.

Belongs to the surface antigen msp4 family.

This is an uncharacterized protein from Brucella melitensis biotype 1 (strain ATCC 23456 / CCUG 17765 / NCTC 10094 / 16M).